A 220-amino-acid polypeptide reads, in one-letter code: MGLFGKTQERPPKDLVNEWSLKIRKEMRVIDRQIRDIQREQEKVKRSIKESAKKGNREACVILAKEVVQSKKAVNKLYASKAHMNSVLMSMKNQLAVLRVSGSLQKSTEVMKAMQNLVKLPEIQATMRELSKEMMKAGIIEEMLEDTFEGMEDQDEMEEQAEMEIDRILFEVTAGALGKAPSKVTDALPEPEITGAMAASDEEEEEDLEAMHSRLAALRS.

A lipid anchor (N-myristoyl glycine) is attached at G2. Residues 22–54 adopt a coiled-coil conformation; the sequence is KIRKEMRVIDRQIRDIQREQEKVKRSIKESAKK. Positions 168 to 169 are important for autoinhibitory function; that stretch reads IL. Residues 181-220 form a disordered region; sequence PSKVTDALPEPEITGAMAASDEEEEEDLEAMHSRLAALRS. The MIT-interacting motif motif lies at 201–209; that stretch reads DEEEEEDLE. 2 interaction with STAMBP regions span residues 203–207 and 219–220; these read EEEED and RS.

This sequence belongs to the SNF7 family. Probable core component of the endosomal sorting required for transport complex III (ESCRT-III). ESCRT-III components are thought to multimerize to form a flat lattice on the perimeter membrane of the endosome. Several assembly forms of ESCRT-III may exist that interact and act sequentially.

The protein localises to the cytoplasm. Its subcellular location is the cytosol. The protein resides in the membrane. It is found in the endosome. It localises to the late endosome membrane. Functionally, probable core component of the endosomal sorting required for transport complex III (ESCRT-III) which is involved in multivesicular bodies (MVBs) formation and sorting of endosomal cargo proteins into MVBs. MVBs contain intraluminal vesicles (ILVs) that are generated by invagination and scission from the limiting membrane of the endosome and mostly are delivered to lysosomes enabling degradation of membrane proteins, such as stimulated growth factor receptors, lysosomal enzymes and lipids. Involved in late stages of cytokinesis. Plays a role in endosomal sorting/trafficking of EGF receptor. This is Charged multivesicular body protein 3 (chmp3) from Xenopus laevis (African clawed frog).